Here is a 233-residue protein sequence, read N- to C-terminus: Large ribosomal subunit protein uL1 (233 aa).

The protein belongs to the universal ribosomal protein uL1 family. Part of the 50S ribosomal subunit.

Binds directly to 23S rRNA. The L1 stalk is quite mobile in the ribosome, and is involved in E site tRNA release. In terms of biological role, protein L1 is also a translational repressor protein, it controls the translation of the L11 operon by binding to its mRNA. The protein is Large ribosomal subunit protein uL1 of Rhizobium etli (strain CIAT 652).